Here is a 238-residue protein sequence, read N- to C-terminus: HTH-type transcriptional regulator TreR (238 aa).

The HTH gntR-type domain occupies 1-71; it reads MKVNKFITIY…RGKGSVVLNR (71 aa). A DNA-binding region (H-T-H motif) is located at residues 31–50; it reads EHELTAQYGTSRETVRKALH.

In terms of assembly, dimer of dimers.

Functionally, repressor for the trePA operon. It is able to bind trehalose-6-phosphate. In Bacillus subtilis (strain 168), this protein is HTH-type transcriptional regulator TreR (treR).